We begin with the raw amino-acid sequence, 162 residues long: Ribonuclease P protein component (162 aa).

The disordered stretch occupies residues Met1–Leu62. A compositionally biased stretch (basic and acidic residues) spans Gly21–Ala36.

This sequence belongs to the RnpA family. As to quaternary structure, consists of a catalytic RNA component (M1 or rnpB) and a protein subunit.

The enzyme catalyses Endonucleolytic cleavage of RNA, removing 5'-extranucleotides from tRNA precursor.. Functionally, RNaseP catalyzes the removal of the 5'-leader sequence from pre-tRNA to produce the mature 5'-terminus. It can also cleave other RNA substrates such as 4.5S RNA. The protein component plays an auxiliary but essential role in vivo by binding to the 5'-leader sequence and broadening the substrate specificity of the ribozyme. The sequence is that of Ribonuclease P protein component from Thermus aquaticus.